A 175-amino-acid polypeptide reads, in one-letter code: Trafficking protein particle complex subunit 20 (175 aa).

Belongs to the TRAPP small subunits family. Sedlin subfamily. As to quaternary structure, part of the multisubunit TRAPP (transport protein particle) I complex composed of BET3, BET5, TRS20, TRS23, TRS31 and TRS33. Part of the multisubunit TRAPP (transport protein particle) II complex composed of BET3, BET5, TRS20, TRS23, TRS31, TRS33, TRS65, TRS85, TRS120 and TRS130. Part of the multisubunit TRAPP (transport protein particle) III complex composed of BET3, BET5, TRS20, TRS23, TRS31, TRS33 and TRS85.

It is found in the golgi apparatus. It localises to the cis-Golgi network. The protein resides in the endoplasmic reticulum. Its subcellular location is the preautophagosomal structure. Functionally, component of the TRAPP I, TRAPP II and TRAPP III complexes which act as guanine nucleotide exchange factors (GEF) for YPT1. TRAPP I plays a key role in the late stages of endoplasmic reticulum to Golgi traffic. TRAPP II plays a role in intra-Golgi transport. TRAPP III plays a role in autophagosome formation. The chain is Trafficking protein particle complex subunit 20 (TRS20) from Saccharomyces cerevisiae (strain ATCC 204508 / S288c) (Baker's yeast).